Reading from the N-terminus, the 352-residue chain is Protein RecA (352 aa).

An ATP-binding site is contributed by 67–74; the sequence is GPESSGKT.

The protein belongs to the RecA family.

The protein localises to the cytoplasm. Its function is as follows. Can catalyze the hydrolysis of ATP in the presence of single-stranded DNA, the ATP-dependent uptake of single-stranded DNA by duplex DNA, and the ATP-dependent hybridization of homologous single-stranded DNAs. It interacts with LexA causing its activation and leading to its autocatalytic cleavage. This is Protein RecA from Chlamydia trachomatis serovar A (strain ATCC VR-571B / DSM 19440 / HAR-13).